The following is a 122-amino-acid chain: Insulin-like 3 (122 aa).

Residues 1–15 (MRAPLLLMLLALGSA) form the signal peptide. 3 disulfide bridges follow: Cys29/Cys107, Cys41/Cys120, and Cys106/Cys111.

It belongs to the insulin family. As to quaternary structure, heterodimer of a B chain and an A chain linked by two disulfide bonds. Expressed exclusively in Leydig cells of the testis.

It is found in the secreted. Its function is as follows. Seems to play a role in testicular function. May be a trophic hormone with a role in testicular descent in fetal life. Is a ligand for LGR8 receptor. The sequence is that of Insulin-like 3 (Insl3) from Mus musculus (Mouse).